A 432-amino-acid chain; its full sequence is Delta-aminolevulinic acid dehydratase, chloroplastic (432 aa).

A disordered region spans residues 84-113 (AAPPVPAKPSAPEGTPAISPLVMPARPRRN). Lys300 acts as the Schiff-base intermediate with substrate in catalysis. 5-aminolevulinate contacts are provided by Arg310 and Lys322. Glu338 serves as a coordination point for Mg(2+). Residue Lys353 is the Schiff-base intermediate with substrate of the active site. Positions 379 and 418 each coordinate 5-aminolevulinate.

The protein belongs to the ALAD family. In terms of assembly, homooctamer. Mg(2+) is required as a cofactor.

It is found in the plastid. The protein localises to the chloroplast. It carries out the reaction 2 5-aminolevulinate = porphobilinogen + 2 H2O + H(+). Its pathway is porphyrin-containing compound metabolism; protoporphyrin-IX biosynthesis; coproporphyrinogen-III from 5-aminolevulinate: step 1/4. Functionally, catalyzes an early step in the biosynthesis of tetrapyrroles. Binds two molecules of 5-aminolevulinate per subunit, each at a distinct site, and catalyzes their condensation to form porphobilinogen. The sequence is that of Delta-aminolevulinic acid dehydratase, chloroplastic (HEMB) from Physcomitrium patens (Spreading-leaved earth moss).